An 86-amino-acid polypeptide reads, in one-letter code: Anti-adapter protein IraP (86 aa).

The stretch at 1-36 (MKNLIAELLFKLAQKEEESKELCAQVEALEIIVTAM) forms a coiled coil.

It belongs to the IraP family. In terms of assembly, interacts with RssB.

It localises to the cytoplasm. Functionally, inhibits RpoS proteolysis by regulating RssB activity, thereby increasing the stability of the sigma stress factor RpoS especially during phosphate starvation, but also in stationary phase and during nitrogen starvation. Its effect on RpoS stability is due to its interaction with RssB, which probably blocks the interaction of RssB with RpoS, and the consequent delivery of the RssB-RpoS complex to the ClpXP protein degradation pathway. The polypeptide is Anti-adapter protein IraP (Escherichia coli O127:H6 (strain E2348/69 / EPEC)).